The sequence spans 258 residues: MSASRIRAKCFRLGQRCHTRFYDVLKKDIDNVRRGFADAFNPRLAKLLSPLSHVDVQRAVRISMSFEVNLGRRRPDCVCIIQTESSGAGKTVCFIVELKSCRFSANIHTPTKYHQFCEGMRQLRDTMALIKETTPTGSDEIMVTPLLVFVSQRGLNLLQVTRLPPKVIHGNLVMLASHLENVAEYTPPIRSVRERRRLCKKKIHVCSLAKKRAKSCHRSALTKFEENAACGVDLPLRRPSLGACGGILQSITGMFSHG.

The protein belongs to the herpesviridae UL24 family.

Its subcellular location is the virion. The protein localises to the host cytoplasm. It localises to the host nucleus. It is found in the host nucleolus. The protein resides in the host Golgi apparatus. May participate in nuclear egress of viral particles. Plays a role in the dispersal of several host nucleolar proteins including NCL/nucleolin and NPM1. Since deletion of host NCL/nucleolin negatively impact on nuclear egress, UL24 supposedly acts on this process through its effect on host nucleoli. This chain is Protein UL24 homolog, found in Varicella-zoster virus (strain Dumas) (HHV-3).